The following is a 2471-amino-acid chain: Probable polyketide synthase 24 (2471 aa).

Residues 21–449 (ENLVAIVGVG…GSNCCLVLSQ (429 aa)) enclose the Ketosynthase family 3 (KS3) domain. Active-site for beta-ketoacyl synthase activity residues include C190, H332, and H372. The tract at residues 654–687 (GIKASFMLGHSLGEVTTAYCSGMIDIDQLCYLIY) is acyl/malonyl transferase. Residue S664 is the For acyl/malonyl transferase activity of the active site. The interval 953-1075 (ISILGNSMQD…SNFHLNSNDN (123 aa)) is N-terminal hotdog fold. A PKS/mFAS DH domain is found at 953-1245 (ISILGNSMQD…VKSLTPVKDP (293 aa)). Residue H987 is the Proton acceptor; for dehydratase activity of the active site. Positions 1094-1245 (NLSSIPWDEF…VKSLTPVKDP (152 aa)) are C-terminal hotdog fold. D1157 (proton donor; for dehydratase activity) is an active-site residue. Residues 1426 to 1469 (IINEQQQQQQQQQQQQQQQQQQQQQLLNNENNKESLKNLLVNCN) adopt a coiled-coil conformation. The Carrier domain maps to 2336 to 2413 (SSSTNVKNKF…MVYQIINDSL (78 aa)). O-(pantetheine 4'-phosphoryl)serine is present on S2373.

Pantetheine 4'-phosphate serves as cofactor.

In terms of biological role, probable polyketide synthase. The polypeptide is Probable polyketide synthase 24 (pks24) (Dictyostelium discoideum (Social amoeba)).